Reading from the N-terminus, the 424-residue chain is Serine--tRNA ligase (424 aa).

232–234 lines the L-serine pocket; the sequence is TAE. An ATP-binding site is contributed by 263–265; the sequence is RSE. E286 lines the L-serine pocket. Residue 350-353 participates in ATP binding; sequence EISS. S385 is an L-serine binding site.

Belongs to the class-II aminoacyl-tRNA synthetase family. Type-1 seryl-tRNA synthetase subfamily. As to quaternary structure, homodimer. The tRNA molecule binds across the dimer.

The protein resides in the cytoplasm. The catalysed reaction is tRNA(Ser) + L-serine + ATP = L-seryl-tRNA(Ser) + AMP + diphosphate + H(+). The enzyme catalyses tRNA(Sec) + L-serine + ATP = L-seryl-tRNA(Sec) + AMP + diphosphate + H(+). It participates in aminoacyl-tRNA biosynthesis; selenocysteinyl-tRNA(Sec) biosynthesis; L-seryl-tRNA(Sec) from L-serine and tRNA(Sec): step 1/1. Functionally, catalyzes the attachment of serine to tRNA(Ser). Is also able to aminoacylate tRNA(Sec) with serine, to form the misacylated tRNA L-seryl-tRNA(Sec), which will be further converted into selenocysteinyl-tRNA(Sec). The sequence is that of Serine--tRNA ligase from Latilactobacillus sakei subsp. sakei (strain 23K) (Lactobacillus sakei subsp. sakei).